We begin with the raw amino-acid sequence, 412 residues long: Phosphoglycerate kinase (412 aa).

Residues 24-26 (DLN), Arg-44, 67-70 (HLGR), Arg-126, and Arg-170 each bind substrate. ATP is bound by residues Lys-220, Gly-308, Glu-339, and 368 to 371 (GGDS).

Belongs to the phosphoglycerate kinase family. As to quaternary structure, monomer.

Its subcellular location is the cytoplasm. It carries out the reaction (2R)-3-phosphoglycerate + ATP = (2R)-3-phospho-glyceroyl phosphate + ADP. Its pathway is carbohydrate degradation; glycolysis; pyruvate from D-glyceraldehyde 3-phosphate: step 2/5. The sequence is that of Phosphoglycerate kinase from Mycobacteroides abscessus (strain ATCC 19977 / DSM 44196 / CCUG 20993 / CIP 104536 / JCM 13569 / NCTC 13031 / TMC 1543 / L948) (Mycobacterium abscessus).